We begin with the raw amino-acid sequence, 460 residues long: MTNYAIILAAGKGTRMTSDLPKVLHKVSGLTMLEHVFRSVKAISPEKSVTVIGHKSEMVRAVLADQSAFVHQTEQLGTGHAVMMAETQLEGLEGHTLVIAGDTPLITGESLKSLIDFHVNHKNVATILTATAPDPFGYGRIVRNKDGEVIKIVEQKDANEYEQQLKEINTGTYVFDNKRLFEALKCITTNNAQGEYYLTDVVAIFRANKEKVGAYILRDFNESLGVNDRVALATAETVMRQRITQKHMVNGVTFQNPETVYIESDVEIAPDVLIEGNVTLKGRTHIGSGTVLTNGTYIVDSEIGQGSIITNSMIESSVLAAGVTVGPYAHLRPGTTLDREVHIGNFVEVKDSHIGEKTKAGHLTYIGNAQVGSSVNVGAGTITVNYDGQNKYETVIGDHAFIGSNSTLIAPLEVGDNALTAAGSTISKTVPADSIVIGRSRQVTKEGYAKRLAHHPSRSK.

The interval 1–229 (MTNYAIILAA…FNESLGVNDR (229 aa)) is pyrophosphorylase. UDP-N-acetyl-alpha-D-glucosamine is bound by residues 8-11 (LAAG), K22, Q72, and 77-78 (GT). A Mg(2+)-binding site is contributed by D102. UDP-N-acetyl-alpha-D-glucosamine is bound by residues G139, E154, N169, and N227. A Mg(2+)-binding site is contributed by N227. The tract at residues 230 to 250 (VALATAETVMRQRITQKHMVN) is linker. The N-acetyltransferase stretch occupies residues 251–460 (GVTFQNPETV…RLAHHPSRSK (210 aa)). UDP-N-acetyl-alpha-D-glucosamine contacts are provided by R332 and K350. H362 serves as the catalytic Proton acceptor. Y365 and N376 together coordinate UDP-N-acetyl-alpha-D-glucosamine. Acetyl-CoA contacts are provided by residues A379, 385–386 (NY), S404, A422, and R439.

In the N-terminal section; belongs to the N-acetylglucosamine-1-phosphate uridyltransferase family. It in the C-terminal section; belongs to the transferase hexapeptide repeat family. Homotrimer. Requires Mg(2+) as cofactor.

The protein resides in the cytoplasm. It carries out the reaction alpha-D-glucosamine 1-phosphate + acetyl-CoA = N-acetyl-alpha-D-glucosamine 1-phosphate + CoA + H(+). The catalysed reaction is N-acetyl-alpha-D-glucosamine 1-phosphate + UTP + H(+) = UDP-N-acetyl-alpha-D-glucosamine + diphosphate. Its pathway is nucleotide-sugar biosynthesis; UDP-N-acetyl-alpha-D-glucosamine biosynthesis; N-acetyl-alpha-D-glucosamine 1-phosphate from alpha-D-glucosamine 6-phosphate (route II): step 2/2. The protein operates within nucleotide-sugar biosynthesis; UDP-N-acetyl-alpha-D-glucosamine biosynthesis; UDP-N-acetyl-alpha-D-glucosamine from N-acetyl-alpha-D-glucosamine 1-phosphate: step 1/1. It participates in bacterial outer membrane biogenesis; LPS lipid A biosynthesis. Catalyzes the last two sequential reactions in the de novo biosynthetic pathway for UDP-N-acetylglucosamine (UDP-GlcNAc). The C-terminal domain catalyzes the transfer of acetyl group from acetyl coenzyme A to glucosamine-1-phosphate (GlcN-1-P) to produce N-acetylglucosamine-1-phosphate (GlcNAc-1-P), which is converted into UDP-GlcNAc by the transfer of uridine 5-monophosphate (from uridine 5-triphosphate), a reaction catalyzed by the N-terminal domain. This is Bifunctional protein GlmU from Streptococcus pyogenes serotype M18 (strain MGAS8232).